Consider the following 854-residue polypeptide: DNA mismatch repair protein MutS (854 aa).

An ATP-binding site is contributed by 615–622 (GPNMGGKS).

This sequence belongs to the DNA mismatch repair MutS family.

Its function is as follows. This protein is involved in the repair of mismatches in DNA. It is possible that it carries out the mismatch recognition step. This protein has a weak ATPase activity. The protein is DNA mismatch repair protein MutS of Aliivibrio fischeri (strain MJ11) (Vibrio fischeri).